A 331-amino-acid chain; its full sequence is Pantothenate kinase (331 aa).

G109 to S116 lines the ATP pocket.

The protein belongs to the prokaryotic pantothenate kinase family.

It localises to the cytoplasm. The catalysed reaction is (R)-pantothenate + ATP = (R)-4'-phosphopantothenate + ADP + H(+). It functions in the pathway cofactor biosynthesis; coenzyme A biosynthesis; CoA from (R)-pantothenate: step 1/5. The sequence is that of Pantothenate kinase from Sinorhizobium medicae (strain WSM419) (Ensifer medicae).